Here is a 265-residue protein sequence, read N- to C-terminus: Thymidine kinase 2, mitochondrial (265 aa).

A mitochondrion-targeting transit peptide spans 1-33 (MLLRPLRGWAALALRCFEPGSPGSPASGPGSRR). A compositionally biased stretch (low complexity) spans 21–31 (SPGSPASGPGS). The segment at 21 to 45 (SPGSPASGPGSRRVQRGAWPSDKER) is disordered. ATP is bound at residue 57–65 (GNIASGKTT). E133 serves as the catalytic Proton acceptor.

It belongs to the DCK/DGK family. Homodimer.

Its subcellular location is the mitochondrion. The enzyme catalyses thymidine + ATP = dTMP + ADP + H(+). The catalysed reaction is 2'-deoxycytidine + ATP = dCMP + ADP + H(+). It carries out the reaction 2'-deoxyuridine + ATP = dUMP + ADP + H(+). Its function is as follows. Phosphorylates thymidine, deoxycytidine, and deoxyuridine in the mitochondrial matrix. In non-replicating cells, where cytosolic dNTP synthesis is down-regulated, mtDNA synthesis depends solely on TK2 and DGUOK. The sequence is that of Thymidine kinase 2, mitochondrial (TK2) from Macaca fascicularis (Crab-eating macaque).